The sequence spans 356 residues: Tyrosine recombinase XerS (356 aa).

The Core-binding (CB) domain occupies 16–121 (IMPWYVLDYY…ALSSLYKYLT (106 aa)). In terms of domain architecture, Tyr recombinase spans 169–354 (AFLDYVDKEY…VNDEQKNALD (186 aa)). Residues arginine 210, lysine 234, histidine 306, arginine 309, and histidine 332 contribute to the active site. The O-(3'-phospho-DNA)-tyrosine intermediate role is filled by tyrosine 341.

It belongs to the 'phage' integrase family. XerS subfamily.

The protein localises to the cytoplasm. FtsK is required for recombination. In terms of biological role, site-specific tyrosine recombinase, which acts by catalyzing the cutting and rejoining of the recombining DNA molecules. Essential to convert dimers of the bacterial chromosome into monomers to permit their segregation at cell division. In Streptococcus pyogenes serotype M49 (strain NZ131), this protein is Tyrosine recombinase XerS.